A 502-amino-acid chain; its full sequence is MDEFQRDGKKNRSWQQCFLYPLFFREDLYAIAHDHNLDRSSSSEPTEILNSNYFSFLTVKRLIRRIRQQNDSIVLFGICDPNQFIDRNRNSYSESVLEGLTVVLEVSFAMRSKHFLEGMDGWKSIRSIHSIFPLMEDKFPHSNYISDIRVPYSIHPEILVRTFRRWIRDAPFLDLLRSILHEWRNSFSAENLQKALVAPGENMRFPLFLWNSYIYECESFLVPLLKRFYTSRSLVYGSFPDRTDFDRKIKHIFTFPVKISTKRIWWMKDSFIHYVRYGERSLIALKGTHLQVKKCRYHLFHFWQCYFHLWSQSYRVSILELSRNYSYFLGFFIRFKMKSLVVRTKMIDSLLTTDLITNELNPIAPIRSILLFLAKERFCDISGRPISRLSWTSLSDDDILDRFDRIWINLFHYYSGSINKDSLYHIKYILLLSCAKTLACKHKSTIRLVREEPGSELFTKSFSKEREFIYSSFSKTRSQRERIWNSDILQINPLANSYTINK.

It belongs to the intron maturase 2 family. MatK subfamily.

The protein resides in the plastid. Its subcellular location is the chloroplast. Functionally, usually encoded in the trnK tRNA gene intron. Probably assists in splicing its own and other chloroplast group II introns. This is Maturase K from Cephalotaxus fortunei (Chinese plum-yew).